A 161-amino-acid chain; its full sequence is Peroxynitrite isomerase 2 (161 aa).

The GXWXGXG motif lies at Gly-17–Gly-23. His-152 contacts heme b.

It belongs to the nitrobindin family. Homodimer. Heme b serves as cofactor.

The catalysed reaction is peroxynitrite = nitrate. Its pathway is nitrogen metabolism. Functionally, heme-binding protein able to scavenge peroxynitrite and to protect free L-tyrosine against peroxynitrite-mediated nitration, by acting as a peroxynitrite isomerase that converts peroxynitrite to nitrate. Therefore, this protein likely plays a role in peroxynitrite sensing and in the detoxification of reactive nitrogen and oxygen species (RNS and ROS, respectively). Is able to bind nitric oxide (NO) in vitro, but may act as a sensor of peroxynitrite levels in vivo. In Mycobacterium avium (strain 104), this protein is Peroxynitrite isomerase 2.